The following is a 546-amino-acid chain: Chaperonin GroEL (546 aa).

ATP is bound by residues 30 to 33 (TLGP), Lys-51, 87 to 91 (DGTTT), Gly-415, and Asp-495.

Belongs to the chaperonin (HSP60) family. In terms of assembly, forms a cylinder of 14 subunits composed of two heptameric rings stacked back-to-back. Interacts with the co-chaperonin GroES.

It localises to the cytoplasm. The enzyme catalyses ATP + H2O + a folded polypeptide = ADP + phosphate + an unfolded polypeptide.. Its function is as follows. Together with its co-chaperonin GroES, plays an essential role in assisting protein folding. The GroEL-GroES system forms a nano-cage that allows encapsulation of the non-native substrate proteins and provides a physical environment optimized to promote and accelerate protein folding. This Brucella suis (strain ATCC 23445 / NCTC 10510) protein is Chaperonin GroEL.